A 255-amino-acid chain; its full sequence is Tryptophan synthase alpha chain (255 aa).

Residues Glu-49 and Asp-60 each act as proton acceptor in the active site.

Belongs to the TrpA family. In terms of assembly, tetramer of two alpha and two beta chains.

It carries out the reaction (1S,2R)-1-C-(indol-3-yl)glycerol 3-phosphate + L-serine = D-glyceraldehyde 3-phosphate + L-tryptophan + H2O. Its pathway is amino-acid biosynthesis; L-tryptophan biosynthesis; L-tryptophan from chorismate: step 5/5. Its function is as follows. The alpha subunit is responsible for the aldol cleavage of indoleglycerol phosphate to indole and glyceraldehyde 3-phosphate. The chain is Tryptophan synthase alpha chain from Desulfovibrio desulfuricans (strain ATCC 27774 / DSM 6949 / MB).